A 417-amino-acid polypeptide reads, in one-letter code: Divinyl chlorophyllide a 8-vinyl-reductase, chloroplastic (417 aa).

Residues Met1–Ser49 constitute a chloroplast transit peptide.

Highly expressed in leaves, stems and flower buds. Detected in roots.

The protein resides in the plastid. It is found in the chloroplast. The enzyme catalyses protochlorophyllide a + NADP(+) = 3,8-divinyl protochlorophyllide a + NADPH + H(+). The protein operates within porphyrin-containing compound metabolism; chlorophyll biosynthesis. In terms of biological role, catalyzes the conversion of divinyl chlorophyllide to monovinyl chlorophyllide. Reduces the 8-vinyl group of the tetrapyrrole to an ethyl group using NADPH as the reductant. The best substrate is (3,8-divinyl)-chlorophyllide a (DV-Chlidea). Very low activity with (3,8-divinyl)-protochlorophyllide a (DV-Pchlidea) and (3,8-divinyl)-magnesium-protoporphyrin IX monomethyl ester (DV-MPE). No activity with (3,8-divinyl)-chlorophyllide b (DV-Chlideb), (3,8-divinyl)-magnesium-protoporphyrin IX (DV-Mg-Proto) and either (3,8-divinyl)-chlorophyll a (DV-Chla) or b (DV-Chlb). The polypeptide is Divinyl chlorophyllide a 8-vinyl-reductase, chloroplastic (DVR) (Arabidopsis thaliana (Mouse-ear cress)).